A 251-amino-acid chain; its full sequence is Dehydration-responsive element-binding protein 1I (251 aa).

A disordered region spans residues 1–50; it reads MCTSKLEEITGEWPPPALQAASTTSSSEPCRRLSPPSSKRPAGRTKFHET. A DNA-binding region (AP2/ERF) is located at residues 54 to 114; that stretch reads VFRGVRRRGR…GRAAACLNFA (61 aa). The segment at 169 to 198 is disordered; the sequence is ATSEPSAASDDDAVTSSSSTTDADEEASPF.

This sequence belongs to the AP2/ERF transcription factor family. ERF subfamily.

It is found in the nucleus. Functionally, transcriptional activator that binds specifically to the DNA sequence 5'-[AG]CCGAC-3'. Binding to the C-repeat/DRE element mediates high salinity- and dehydration-inducible transcription. In Oryza sativa subsp. japonica (Rice), this protein is Dehydration-responsive element-binding protein 1I (DREB1I).